Reading from the N-terminus, the 89-residue chain is Small ribosomal subunit protein uS15 (89 aa).

The protein belongs to the universal ribosomal protein uS15 family. Part of the 30S ribosomal subunit. Forms a bridge to the 50S subunit in the 70S ribosome, contacting the 23S rRNA.

Functionally, one of the primary rRNA binding proteins, it binds directly to 16S rRNA where it helps nucleate assembly of the platform of the 30S subunit by binding and bridging several RNA helices of the 16S rRNA. Forms an intersubunit bridge (bridge B4) with the 23S rRNA of the 50S subunit in the ribosome. This chain is Small ribosomal subunit protein uS15, found in Dinoroseobacter shibae (strain DSM 16493 / NCIMB 14021 / DFL 12).